A 616-amino-acid polypeptide reads, in one-letter code: MKQSKMLIPTLREMPSDAQVISHALMLRAGYVRQVSAGVYSYLPLANRVIEKAKRIMREEFDKIGAVEMLAPALLSADLWRESGRYETYGEDLYKLKNREKSDFILGPTHEETFTAIVRDSVKSYKQLPLNLYQIQPKYRDEKRPRNGLLRTREFIMKDAYSFHANYDSLDVAYDEYKSAYEKIFTRSELDFKAIIGDGGAMGGKDSQEFMAITPDRTDLNRWVVLDKSVASFDEIPEDVQEAIRTELTSWMVSGEDTIAYSSESSYAANLEMATDEYKPAGRVVTEEEVARVSTPDCKTIDEVAAFLGLDESQTIKTLVYMADESPVVALLVGNDQLNEVKLKNHLAADFFDVASEDQVRQLLGAGFGSLGPVNLPEGVRIIADRKVQDLANAVVGANEDGYHLTGVNPGRDFTAEFVDIREVREGEISPDGQGVLKFARGIEIGHIFKLGTRYSDSMNANVLDENGRAVPMIMGCYGIGVSRLLSAVMEQHARLFVNKTPKGEFRYAWGINFPKELAPFDVHLIPVNVKDEEALALTDQIEANLLSAGYEVLVDDRNERAGVKFSDSDLIGLPIRVTVGKKAAEGIVEVKIKATGDTIEVHADNLLETLSILTK.

The protein belongs to the class-II aminoacyl-tRNA synthetase family. ProS type 1 subfamily. As to quaternary structure, homodimer.

It localises to the cytoplasm. The enzyme catalyses tRNA(Pro) + L-proline + ATP = L-prolyl-tRNA(Pro) + AMP + diphosphate. Functionally, catalyzes the attachment of proline to tRNA(Pro) in a two-step reaction: proline is first activated by ATP to form Pro-AMP and then transferred to the acceptor end of tRNA(Pro). As ProRS can inadvertently accommodate and process non-cognate amino acids such as alanine and cysteine, to avoid such errors it has two additional distinct editing activities against alanine. One activity is designated as 'pretransfer' editing and involves the tRNA(Pro)-independent hydrolysis of activated Ala-AMP. The other activity is designated 'posttransfer' editing and involves deacylation of mischarged Ala-tRNA(Pro). The misacylated Cys-tRNA(Pro) is not edited by ProRS. The protein is Proline--tRNA ligase of Streptococcus sanguinis (strain SK36).